A 429-amino-acid polypeptide reads, in one-letter code: MDRLLACLLGFLLIASVGSHAARTPEQYWKSALPNSPIPSSLSQLLSTAGGGTSVNVGGGGVHVDAGHGKPGGTTVDVGKGGVGVNVKPGYGKPGGTTVGVGKGGVGVNVKPGYGKPGGTSVGVGKGGVGVNVQPGYGKPGGTTVGVGKGGVGVNVQPGYGKPGGTTVGVGKGGVGVNVKPRGKPVHVNVAPFIYNYAATETQLHDDPNVALFFLEKDLHPGKTMAVHFTATTAGEKFLPRSEADAMPFSSEKVPEILSRFSVKPGSVEAAEMAQTLRDCEAPPAQGERKACATSLESMVDFATSSLGTSHVRAASTVVGKEGSPEQEYTVTAVKRAAAGGDQDQLVACHAEPYAYAVFACHLTRATRAYAVSMAGRDGTGVEAVAVCHADTAGWNPKHVAFQVLKVKPGTVPVCHFLPQDHVVWTRSG.

Residues 1-21 (MDRLLACLLGFLLIASVGSHA) form the signal peptide. Residues 59–81 (GGGVHVDAGHGKPGGTTVDVGKG) form a disordered region. The 216-residue stretch at 213–428 (FFLEKDLHPG…PQDHVVWTRS (216 aa)) folds into the BURP domain.

Expressed in stems, leaves, shoot, panicles and stamen.

The sequence is that of BURP domain-containing protein 3 (BURP3) from Oryza sativa subsp. japonica (Rice).